The primary structure comprises 226 residues: Ribonuclease 3 (226 aa).

One can recognise an RNase III domain in the interval 6-128 (INRLQRKLGY…LIGGVFLDSD (123 aa)). Glu-41 serves as a coordination point for Mg(2+). Asp-45 is an active-site residue. Mg(2+)-binding residues include Asp-114 and Glu-117. Glu-117 is a catalytic residue. In terms of domain architecture, DRBM spans 155 to 225 (DPKTRLQEYL…AEQALKQLEL (71 aa)).

Belongs to the ribonuclease III family. Homodimer. It depends on Mg(2+) as a cofactor.

It is found in the cytoplasm. It carries out the reaction Endonucleolytic cleavage to 5'-phosphomonoester.. Functionally, digests double-stranded RNA. Involved in the processing of primary rRNA transcript to yield the immediate precursors to the large and small rRNAs (23S and 16S). Processes some mRNAs, and tRNAs when they are encoded in the rRNA operon. Processes pre-crRNA and tracrRNA of type II CRISPR loci if present in the organism. The sequence is that of Ribonuclease 3 from Yersinia pseudotuberculosis serotype O:1b (strain IP 31758).